The chain runs to 440 residues: MESQQLSQHSPISHGSACASVTSKEVHTNQDPLDVSASKIQEYDKASTKANSQQTTTPASSAVPENPHHASPQTAQSHSPQNGPYQQQCMMTQNQANPSGWSFYGRPSMIPYTPYQMSPMYFPPGPHSQFPQYPSSVGTPLSTPSPESGNTFTDSSSADSDMTSTKKYVRPPPMLTSPNDFLNWVKTYIKFLQNSNLGDIIPTATRKAVRQMTDDELTFLCHTFQLFAPSQFLPTWVKDILSADYTDIMKILSKSINKMQSDTQEVNDITTLATLHYNGSTPADAFEAEVTNILDRLNNNGIPINNKVACQFIMRGLSGEYKFLRYARHRYIHMTVADLFSDIHSMYEEQQESKRNKSTYRRNPSDEKKDSRTYTNTTKPKSITRNSQKPNNSQSRTARAHNVSTSNNSSGPDNDLIRGSTTEPIQLKNKHDLHLRPGTY.

4 stretches are compositionally biased toward polar residues: residues Met-1–Ser-23, Thr-48–Ser-60, Ser-71–Gln-86, and Pro-131–Phe-152. 3 disordered regions span residues Met-1–Gln-86, Pro-131–Pro-171, and Gln-350–Ile-425. A compositionally biased stretch (low complexity) spans Thr-153–Thr-165. Positions Asn-299–His-401 are RNA-binding. Positions Asn-363–Arg-372 are enriched in basic and acidic residues. Residues Thr-373–Pro-412 show a composition bias toward polar residues.

As to quaternary structure, homotrimer.

The protein resides in the cytoplasm. Its function is as follows. Capsid protein (CA) is the structural component of the virus-like particle (VLP), forming the shell that encapsulates the retrotransposons dimeric RNA genome. The particles are assembled from trimer-clustered units and there are holes in the capsid shells that allow for the diffusion of macromolecules. CA also has nucleocapsid-like chaperone activity, promoting primer tRNA(i)-Met annealing to the multipartite primer-binding site (PBS), dimerization of Ty1 RNA and initiation of reverse transcription. This Saccharomyces cerevisiae (strain ATCC 204508 / S288c) (Baker's yeast) protein is Transposon Ty1-NL1 Gag polyprotein (TY1A-NL1).